The following is a 278-amino-acid chain: 4-deoxy-L-threo-5-hexosulose-uronate ketol-isomerase (278 aa).

Zn(2+) is bound by residues His-196, His-198, Glu-203, and His-245.

The protein belongs to the KduI family. It depends on Zn(2+) as a cofactor.

It carries out the reaction 5-dehydro-4-deoxy-D-glucuronate = 3-deoxy-D-glycero-2,5-hexodiulosonate. It functions in the pathway glycan metabolism; pectin degradation; 2-dehydro-3-deoxy-D-gluconate from pectin: step 4/5. In terms of biological role, catalyzes the isomerization of 5-dehydro-4-deoxy-D-glucuronate to 3-deoxy-D-glycero-2,5-hexodiulosonate. In Pectobacterium carotovorum subsp. carotovorum (Erwinia carotovora subsp. carotovora), this protein is 4-deoxy-L-threo-5-hexosulose-uronate ketol-isomerase.